We begin with the raw amino-acid sequence, 64 residues long: Prokaryotic ubiquitin-like protein Pup (64 aa).

A disordered region spans residues 1–37 (MAQEQTKRGGGGGEDDDLTGSTAAGQERREKLTDETD). Residues 21 to 58 (STAAGQERREKLTDETDDLLDEIDDVLEENAEDFVRAY) form an ARC ATPase binding region. Positions 23–52 (AAGQERREKLTDETDDLLDEIDDVLEENAE) form a coiled coil. Position 64 is a deamidated glutamine (glutamine 64). An Isoglutamyl lysine isopeptide (Gln-Lys) (interchain with K-? in acceptor proteins) cross-link involves residue glutamine 64.

Belongs to the prokaryotic ubiquitin-like protein family. Strongly interacts with the proteasome-associated ATPase ARC through a hydrophobic interface; the interacting region of Pup lies in its C-terminal half. There is one Pup binding site per ARC hexamer ring. In terms of processing, is modified by deamidation of its C-terminal glutamine to glutamate by the deamidase Dop, a prerequisite to the subsequent pupylation process.

The protein operates within protein degradation; proteasomal Pup-dependent pathway. Its function is as follows. Protein modifier that is covalently attached to lysine residues of substrate proteins, thereby targeting them for proteasomal degradation. The tagging system is termed pupylation. The sequence is that of Prokaryotic ubiquitin-like protein Pup from Mycolicibacterium vanbaalenii (strain DSM 7251 / JCM 13017 / BCRC 16820 / KCTC 9966 / NRRL B-24157 / PYR-1) (Mycobacterium vanbaalenii).